Reading from the N-terminus, the 806-residue chain is Phosphatidylinositol 4-kinase beta (806 aa).

Positions 55–247 (LDKVKLIRGS…GTKLRKLILS (193 aa)) constitute a PIK helical domain. Disordered regions lie at residues 69-104 (LDKI…SASR) and 253-310 (AHKK…DEPV). Residues 283–302 (DATVSISLSSNLKRTSSNPK) are compositionally biased toward polar residues. One can recognise a PI3K/PI4K catalytic domain in the interval 525–791 (EPWQEKVRRI…MVDGSMRSIT (267 aa)). The tract at residues 531–537 (VRRIREG) is G-loop. A catalytic loop region spans residues 658–666 (QVKDRHNGN). An activation loop region spans residues 677–701 (HIDFGFILSSSPRNLGFETSAFKLT).

This sequence belongs to the PI3/PI4-kinase family. Type III PI4K subfamily. It depends on Mg(2+) as a cofactor. Requires Mn(2+) as cofactor.

The protein localises to the endomembrane system. It localises to the mitochondrion outer membrane. Its subcellular location is the rough endoplasmic reticulum membrane. It carries out the reaction a 1,2-diacyl-sn-glycero-3-phospho-(1D-myo-inositol) + ATP = a 1,2-diacyl-sn-glycero-3-phospho-(1D-myo-inositol 4-phosphate) + ADP + H(+). In terms of biological role, phosphorylates phosphatidylinositol (PI) in the first committed step in the production of the second messenger inositol-1,4,5,-trisphosphate (PIP). May play an important role in the inner ear development. The sequence is that of Phosphatidylinositol 4-kinase beta (pi4kb) from Xenopus tropicalis (Western clawed frog).